A 536-amino-acid polypeptide reads, in one-letter code: MFS-type efflux pump MFS1 (536 aa).

3 helical membrane passes run 30-50 (VTGL…LLVA), 80-100 (YLLT…FFPV), and 102-122 (WVFL…GAAP). The N-linked (GlcNAc...) asparagine glycan is linked to asparagine 123. The next 3 helical transmembrane spans lie at 133-153 (VAGI…AYSI), 163-183 (GAIG…GGAF), and 191-211 (WCFY…LIFL). A glycan (N-linked (GlcNAc...) asparagine) is linked at asparagine 221. The next 8 membrane-spanning stretches (helical) occupy residues 234 to 254 (IGTA…QWGG), 264 to 284 (IIAL…FQIR), 306 to 326 (FFLF…PIWF), 342 to 362 (IPMV…VTAI), 366 to 386 (APLY…LTTF), 400 to 420 (IIFG…AQAV), 426 to 446 (VAVG…LFVS), and 503 to 523 (TWYV…GMEW).

The protein belongs to the major facilitator superfamily. TCR/Tet family.

The protein resides in the cell membrane. MFS-type efflux pump involved in the modulation susceptibility to azoles, including fluconazole, itraconazole, ketoconazole, miconazole and voriconazole. Confers also increased resistance chloramphenicol and thiamphenicol, suggesting that it acts as a pleiotropic drug transporter with a broad substrate spectrum. Finally, increases the tolerance to cycloheximide when expressed in S.cerevisiae, but not in dermatophyte species. This chain is MFS-type efflux pump MFS1, found in Trichophyton rubrum (strain ATCC MYA-4607 / CBS 118892) (Athlete's foot fungus).